Reading from the N-terminus, the 138-residue chain is MLIPKRVKFRRQHRPNRSGMSKGGNRVTFGDYGLQALEPTYITNRQIEAARIAINRHIKRGGKVWINIFPDRPLTQKPLGVRMGSGKGPVEKWVANVKPGRILFEMSYPDEQAAMEALRRAGAKLPCKVRIVKKEDQF.

Over residues 1 to 16 (MLIPKRVKFRRQHRPN) the composition is skewed to basic residues. The interval 1–25 (MLIPKRVKFRRQHRPNRSGMSKGGN) is disordered.

Belongs to the universal ribosomal protein uL16 family. In terms of assembly, part of the 50S ribosomal subunit.

In terms of biological role, binds 23S rRNA and is also seen to make contacts with the A and possibly P site tRNAs. The chain is Large ribosomal subunit protein uL16 from Corynebacterium urealyticum (strain ATCC 43042 / DSM 7109).